We begin with the raw amino-acid sequence, 466 residues long: 3-isopropylmalate dehydratase large subunit (466 aa).

[4Fe-4S] cluster contacts are provided by Cys-347, Cys-407, and Cys-410.

It belongs to the aconitase/IPM isomerase family. LeuC type 1 subfamily. In terms of assembly, heterodimer of LeuC and LeuD. Requires [4Fe-4S] cluster as cofactor.

It catalyses the reaction (2R,3S)-3-isopropylmalate = (2S)-2-isopropylmalate. The protein operates within amino-acid biosynthesis; L-leucine biosynthesis; L-leucine from 3-methyl-2-oxobutanoate: step 2/4. Functionally, catalyzes the isomerization between 2-isopropylmalate and 3-isopropylmalate, via the formation of 2-isopropylmaleate. The protein is 3-isopropylmalate dehydratase large subunit of Shigella flexneri serotype 5b (strain 8401).